Reading from the N-terminus, the 190-residue chain is Potassium-transporting ATPase KdpC subunit (190 aa).

The chain crosses the membrane as a helical span at residues 9–29 (VMFILFTIICGGIYPSVVTGI).

The protein belongs to the KdpC family. In terms of assembly, the system is composed of three essential subunits: KdpA, KdpB and KdpC.

The protein resides in the cell inner membrane. Part of the high-affinity ATP-driven potassium transport (or Kdp) system, which catalyzes the hydrolysis of ATP coupled with the electrogenic transport of potassium into the cytoplasm. This subunit acts as a catalytic chaperone that increases the ATP-binding affinity of the ATP-hydrolyzing subunit KdpB by the formation of a transient KdpB/KdpC/ATP ternary complex. The protein is Potassium-transporting ATPase KdpC subunit of Citrifermentans bemidjiense (strain ATCC BAA-1014 / DSM 16622 / JCM 12645 / Bem) (Geobacter bemidjiensis).